The following is a 692-amino-acid chain: Sodium- and chloride-dependent glycine transporter 1 (692 aa).

The segment at 1 to 34 (MIGGDTRAASAHPGMASAQGPVATPSPEQPFPGT) is disordered. The Cytoplasmic portion of the chain corresponds to 1–94 (MIGGDTRAAS…TRGNWGNQIE (94 aa)). Helical transmembrane passes span 95-115 (FVLT…FPYL), 122-142 (GAFM…LFFM), and 174-194 (VSTY…YYFF). At 195–271 (SSMTHVLPWA…LSDDIGNFGE (77 aa)) the chain is on the extracellular side. A run of 9 helical transmembrane segments spans residues 272-292 (VRLP…LCLI), 301-321 (VVYF…VRGV), 346-366 (VWGD…GGLI), 393-413 (SVYA…HLGV), 436-456 (LLPI…LLGL), 492-512 (VAGF…WLLL), 516-536 (YAAS…IMYI), 556-576 (LFFQ…ILIF), and 596-616 (VAIG…YALF). Residues 617–692 (QLCRTDGDTL…GSSRFQDSRI (76 aa)) lie on the Cytoplasmic side of the membrane. The residue at position 657 (Thr-657) is a Phosphothreonine. A phosphoserine mark is found at Ser-659 and Ser-684. The segment at 681–692 (SNGSSRFQDSRI) is essential for interaction with EXOC1.

This sequence belongs to the sodium:neurotransmitter symporter (SNF) (TC 2.A.22) family. SLC6A9 subfamily. Interacts with EXOC1; interaction increases the transporter capacity of SLC6A9 probably by promoting its insertion into the cell membrane. Interacts with EXOC3 and EXOC4. In terms of tissue distribution, expressed in the brain (at protein level). At 11 dpc, expressed in the ventral part of the ventricular zone. At 15 dpc, also expressed in adjacent mantle tissue and the meninges. Strongly expressed in 12 dpc and 15 dpc liver. Expressed in the brain.

The protein localises to the cell membrane. It carries out the reaction glycine(out) + chloride(out) + 2 Na(+)(out) = glycine(in) + chloride(in) + 2 Na(+)(in). Functionally, sodium- and chloride-dependent glycine transporter which is essential for regulating glycine concentrations at inhibitory glycinergic synapses. In terms of biological role, sodium- and chloride-dependent glycine transporter. This is Sodium- and chloride-dependent glycine transporter 1 (Slc6a9) from Mus musculus (Mouse).